The primary structure comprises 172 residues: CYLSERLMLDARENLKLLDRMNRLSPHSCLQDRKDFGLPQEMVEGDQLQKDQAFPVLYEMLQQSFNLFYTEHSSAAWDTTLLEQLCTGLQQQLDHLDTCRGQVMGEEDSELGNMDPIVTVKKYFEGIYDLLQEKGYSDCAWEIVRVEMMRALTVSTTLQKRLTKMGGDLNSP.

Disulfide bonds link C1/C99 and C29/C139.

The protein belongs to the alpha/beta interferon family. IFN-alphaII subfamily. In terms of tissue distribution, constitutively and exclusively expressed in the mononuclear cells of the extraembryonic trophectoderm.

Its subcellular location is the secreted. Functionally, paracrine hormone primarily responsible for maternal recognition of pregnancy. Interacts with endometrial receptors, probably type I interferon receptors, and blocks estrogen receptor expression, preventing the estrogen-induced increase in oxytocin receptor expression in the endometrium. This results in the suppression of the pulsatile endometrial release of the luteolytic hormone prostaglandin F2-alpha, hindering the regression of the corpus luteum (luteolysis) and therefore a return to ovarian cyclicity. This, and a possible direct effect of IFN-tau on prostaglandin synthesis, leads in turn to continued ovarian progesterone secretion, which stimulates the secretion by the endometrium of the nutrients required for the growth of the conceptus. In summary, displays particularly high antiviral and antiproliferative potency concurrently with particular weak cytotoxicity, high antiluteolytic activity and immunomodulatory properties. In contrast with other IFNs, IFN-tau is not virally inducible. This is Interferon tau-3 (IFNT3) from Ovis aries (Sheep).